We begin with the raw amino-acid sequence, 265 residues long: DNA repair protein RecO (265 aa).

This sequence belongs to the RecO family.

Its function is as follows. Involved in DNA repair and RecF pathway recombination. This is DNA repair protein RecO from Mycobacterium marinum (strain ATCC BAA-535 / M).